The chain runs to 348 residues: Malyl-CoA/beta-methylmalyl-CoA/citramalyl-CoA lyase (348 aa).

Substrate is bound by residues 32–33, Lys-40, and Arg-92; that span reads HF. Mg(2+) is bound by residues Glu-157 and Asp-184. Substrate-binding positions include 183 to 184 and Leu-274; that span reads AD.

It belongs to the HpcH/HpaI aldolase family. In terms of assembly, homohexamer. Dimer of trimers. The cofactor is Mg(2+). Mn(2+) serves as cofactor.

The enzyme catalyses (S)-malyl-CoA = glyoxylate + acetyl-CoA. The catalysed reaction is (2R,3S)-beta-methylmalyl-CoA = propanoyl-CoA + glyoxylate. It carries out the reaction (3S)-citramalyl-CoA = pyruvate + acetyl-CoA. Its activity is regulated as follows. Inhibited by oxalate. Involved in the 3-hydroxypropionate cycle used for autotrophic carbon dioxide fixation, and in the glyoxylate assimilation cycle used to regenerate acetyl-CoA and produce pyruvate as universal precursor for biosynthesis. As a part of the 3-hydroxypropionate cycle, it catalyzes the cleavage of (S)-malyl-CoA to yield acetyl-CoA and glyoxylate. As part of the glyoxylate assimilation cycle, it catalyzes the condensation of glyoxylate with propionyl-CoA to yield (2R,3S)-beta-methylmalyl-CoA, and catalyzes the cleavage of (S)-citramalyl-CoA to yield acetyl-CoA and pyruvate. The sequence is that of Malyl-CoA/beta-methylmalyl-CoA/citramalyl-CoA lyase (mcl) from Chloroflexus aurantiacus.